The primary structure comprises 307 residues: Ribosomal RNA small subunit methyltransferase A (307 aa).

The S-adenosyl-L-methionine site is built by asparagine 35, valine 37, glycine 62, glutamate 83, aspartate 113, and asparagine 136.

The protein belongs to the class I-like SAM-binding methyltransferase superfamily. rRNA adenine N(6)-methyltransferase family. RsmA subfamily.

It is found in the cytoplasm. It carries out the reaction adenosine(1518)/adenosine(1519) in 16S rRNA + 4 S-adenosyl-L-methionine = N(6)-dimethyladenosine(1518)/N(6)-dimethyladenosine(1519) in 16S rRNA + 4 S-adenosyl-L-homocysteine + 4 H(+). Functionally, specifically dimethylates two adjacent adenosines (A1518 and A1519) in the loop of a conserved hairpin near the 3'-end of 16S rRNA in the 30S particle. May play a critical role in biogenesis of 30S subunits. This Bifidobacterium longum subsp. infantis (strain ATCC 15697 / DSM 20088 / JCM 1222 / NCTC 11817 / S12) protein is Ribosomal RNA small subunit methyltransferase A.